The primary structure comprises 586 residues: Probable lysosomal cobalamin transporter (586 aa).

The next 9 helical transmembrane spans lie at 10–30 (IWIA…VTTF), 47–67 (VVSL…IALV), 96–116 (IVYY…IPFA), 147–167 (SGFI…PAAG), 191–211 (ALTF…VLYT), 315–335 (LVGG…MLIT), 378–398 (IIMA…LATV), 420–440 (ILIA…SIAM), and 509–529 (VFGA…LIVL). Residue Asn-540 is glycosylated (N-linked (GlcNAc...) asparagine).

Belongs to the LIMR family. LMBRD1 subfamily.

The protein resides in the lysosome membrane. In terms of biological role, probable lysosomal cobalamin transporter. Required to export cobalamin from lysosomes allowing its conversion to cofactors. The polypeptide is Probable lysosomal cobalamin transporter (Pyricularia oryzae (strain 70-15 / ATCC MYA-4617 / FGSC 8958) (Rice blast fungus)).